The chain runs to 521 residues: Bifunctional purine biosynthesis protein PurH (521 aa).

An MGS-like domain is found at 1 to 145 (MIKQALISVS…KNHRDVTVVV (145 aa)).

It belongs to the PurH family.

The catalysed reaction is (6R)-10-formyltetrahydrofolate + 5-amino-1-(5-phospho-beta-D-ribosyl)imidazole-4-carboxamide = 5-formamido-1-(5-phospho-D-ribosyl)imidazole-4-carboxamide + (6S)-5,6,7,8-tetrahydrofolate. It carries out the reaction IMP + H2O = 5-formamido-1-(5-phospho-D-ribosyl)imidazole-4-carboxamide. Its pathway is purine metabolism; IMP biosynthesis via de novo pathway; 5-formamido-1-(5-phospho-D-ribosyl)imidazole-4-carboxamide from 5-amino-1-(5-phospho-D-ribosyl)imidazole-4-carboxamide (10-formyl THF route): step 1/1. It participates in purine metabolism; IMP biosynthesis via de novo pathway; IMP from 5-formamido-1-(5-phospho-D-ribosyl)imidazole-4-carboxamide: step 1/1. This Burkholderia pseudomallei (strain 1106a) protein is Bifunctional purine biosynthesis protein PurH.